Reading from the N-terminus, the 221-residue chain is Ependymin (221 aa).

A signal peptide spans 1-21; the sequence is MQAFAVAALSIWLCLGATTLA. N-linked (GlcNAc...) asparagine glycans are attached at residues Asn37, Asn77, and Asn101.

Belongs to the ependymin family. Forms disulfide-linked dimers. In terms of processing, binds calcium through the terminal sialic acids. As to expression, EPDs are synthesized in the meninx and secreted in the cerebrospinal fluid.

It is found in the secreted. Functionally, may play a role in neural plasticity. May be involved during axon regeneration. This Esox lucius (Northern pike) protein is Ependymin (epd).